Here is a 1221-residue protein sequence, read N- to C-terminus: Deubiquitinating protein VCPIP1 (1221 aa).

Pro residues predominate over residues 1 to 19 (MSQPPPPPPLPPPPPPPEA). The segment at 1-40 (MSQPPPPPPLPPPPPPPEAPQTSSSLAAAATPGGLSKRRD) is disordered. One can recognise an OTU domain in the interval 207–360 (LIPVHVDGDG…RNHYIPLVGI (154 aa)). The active site involves aspartate 215. Residue cysteine 218 is the Nucleophile of the active site. Histidine 353 is an active-site residue. Lysine 407 bears the N6-acetyllysine mark. 2 disordered regions span residues 724–778 (SVMQ…KIRI) and 988–1009 (EATT…GSGG). Phosphoserine occurs at positions 746 and 756. The span at 754–770 (PSSAPATPTKAPYSPTT) shows a compositional bias: low complexity. A Phosphothreonine modification is found at threonine 762. Serine 767, serine 993, serine 997, and serine 1076 each carry phosphoserine. Disordered regions lie at residues 1117-1177 (ASMD…TDSR) and 1189-1221 (RSKA…MDHS). The span at 1143-1156 (VSSSVRPGNLQTGL) shows a compositional bias: polar residues. Over residues 1162-1173 (LTGGTENLNTET) the composition is skewed to low complexity. Phosphoserine is present on residues serine 1197 and serine 1206. Acidic residues predominate over residues 1198 to 1208 (MEEPEEMDSQD). Residues 1209–1221 (AETTNTTEPMDHS) are compositionally biased toward polar residues.

As to quaternary structure, binds VCP and the ternary complex containing STX5A, NSFL1C and VCP. In terms of processing, phosphorylated at Ser-1206 by ATM or ATR following induction of covalent DNA-protein cross-links (DPCs). As to expression, widely expressed.

The protein localises to the nucleus. The protein resides in the cytoplasm. It localises to the endoplasmic reticulum. Its subcellular location is the golgi apparatus. It is found in the golgi stack. It carries out the reaction Thiol-dependent hydrolysis of ester, thioester, amide, peptide and isopeptide bonds formed by the C-terminal Gly of ubiquitin (a 76-residue protein attached to proteins as an intracellular targeting signal).. Its function is as follows. Deubiquitinating enzyme involved in DNA repair and reassembly of the Golgi apparatus and the endoplasmic reticulum following mitosis. Necessary for VCP-mediated reassembly of Golgi stacks after mitosis. Plays a role in VCP-mediated formation of transitional endoplasmic reticulum (tER). Mediates dissociation of the ternary complex containing STX5A, NSFL1C and VCP. Also involved in DNA repair following phosphorylation by ATM or ATR: acts by catalyzing deubiquitination of SPRTN, thereby promoting SPRTN recruitment to chromatin and subsequent proteolytic cleavage of covalent DNA-protein cross-links (DPCs). Hydrolyzes 'Lys-11'- and 'Lys-48'-linked polyubiquitin chains. The sequence is that of Deubiquitinating protein VCPIP1 from Rattus norvegicus (Rat).